We begin with the raw amino-acid sequence, 400 residues long: MGTKNIGKGLTFEDILLVPNYSEVLPREVSLETKLTKNVSLKIPLISSAMDTVTEHLMAVGMARLGGIGIIHKNMDMESQVNEVLKVKNWISNLEKNESTPDQNLDKESTDGKDTKSNNNIDAYSNENLDNKGRLRVGAAIGVNEIERAKLLVEAGVDVIVLDSAHGHSLNIIRTLKEIKSKMNIDVIVGNVVTEEATKELIENGADGIKVGIGPGSICTTRIVAGVGVPQITAIEKCSSVASKFGIPIIADGGIRYSGDIGKALAVGASSVMIGSILAGTEESPGEKELIGDTVYKYYRGMGSVGAMKSGSGDRYFQEKRPENKMVPEGIEGRVKYKGEMEGVVYQLVGGLRSCMGYLGSASIEELWKKSSYVEITTSGLRESHVHDVEIVKEVMNYSK.

Basic and acidic residues predominate over residues lysine 96–lysine 116. The tract at residues lysine 96–serine 125 is disordered. NAD(+) contacts are provided by residues aspartate 163 and glycine 212–glycine 214. K(+)-binding residues include glycine 214 and glycine 216. Serine 217 contacts IMP. Cysteine 219 provides a ligand contact to K(+). Catalysis depends on cysteine 219, which acts as the Thioimidate intermediate. IMP is bound by residues aspartate 252–glycine 254, glycine 275–serine 276, and tyrosine 299–glycine 303. Arginine 315 serves as the catalytic Proton acceptor. Glutamate 329 serves as a coordination point for IMP. K(+) is bound by residues glutamate 383, serine 384, and histidine 385.

Belongs to the IMPDH/GMPR family. In terms of assembly, homotetramer. K(+) serves as cofactor.

Its subcellular location is the cytoplasm. It catalyses the reaction IMP + NAD(+) + H2O = XMP + NADH + H(+). The protein operates within purine metabolism; XMP biosynthesis via de novo pathway; XMP from IMP: step 1/1. Its activity is regulated as follows. Mycophenolic acid (MPA) is a non-competitive inhibitor that prevents formation of the closed enzyme conformation by binding to the same site as the amobile flap. In contrast, mizoribine monophosphate (MZP) is a competitive inhibitor that induces the closed conformation. MPA is a potent inhibitor of mammalian IMPDHs but a poor inhibitor of the bacterial enzymes. MZP is a more potent inhibitor of bacterial IMPDH. Resistant to mycophenolic acid (MPA) inhibition. Functionally, catalyzes the conversion of inosine 5'-phosphate (IMP) to xanthosine 5'-phosphate (XMP), the first committed and rate-limiting step in the de novo synthesis of guanine nucleotides, and therefore plays an important role in the regulation of cell growth. The sequence is that of Inosine-5'-monophosphate dehydrogenase from Cryptosporidium parvum.